The primary structure comprises 75 residues: Conotoxin Vt15.1 (75 aa).

The N-terminal stretch at 1 to 19 (MMPVILPLLLSLAIRGGDG) is a signal peptide. The propeptide occupies 20–43 (QAIQGDRDLIAKLFKRYQEHGLSV). A Tryptophan amide modification is found at W73.

The protein belongs to the conotoxin V superfamily. Contains 4 disulfide bonds. Expressed by the venom duct.

The protein localises to the secreted. The protein is Conotoxin Vt15.1 of Conus planorbis (Planorbis cone).